The sequence spans 452 residues: Phosphoglucosamine mutase (452 aa).

The active-site Phosphoserine intermediate is S112. S112, D251, D253, and D255 together coordinate Mg(2+). S112 carries the phosphoserine modification.

It belongs to the phosphohexose mutase family. The cofactor is Mg(2+). Post-translationally, activated by phosphorylation.

The enzyme catalyses alpha-D-glucosamine 1-phosphate = D-glucosamine 6-phosphate. Its function is as follows. Catalyzes the conversion of glucosamine-6-phosphate to glucosamine-1-phosphate. This chain is Phosphoglucosamine mutase, found in Bordetella pertussis (strain Tohama I / ATCC BAA-589 / NCTC 13251).